The following is a 279-amino-acid chain: Thymidylate synthase (279 aa).

Residue Arg-37 coordinates dUMP. Residue His-67 participates in (6R)-5,10-methylene-5,6,7,8-tetrahydrofolate binding. 142–143 (RR) contacts dUMP. The active-site Nucleophile is the Cys-162. Residues 182–185 (RSAD), Asn-193, and 223–225 (HLY) contribute to the dUMP site. Residue Asp-185 coordinates (6R)-5,10-methylene-5,6,7,8-tetrahydrofolate. Ser-278 contacts (6R)-5,10-methylene-5,6,7,8-tetrahydrofolate.

Belongs to the thymidylate synthase family. Bacterial-type ThyA subfamily. In terms of assembly, homodimer.

It is found in the cytoplasm. The catalysed reaction is dUMP + (6R)-5,10-methylene-5,6,7,8-tetrahydrofolate = 7,8-dihydrofolate + dTMP. Its pathway is pyrimidine metabolism; dTTP biosynthesis. In terms of biological role, catalyzes the reductive methylation of 2'-deoxyuridine-5'-monophosphate (dUMP) to 2'-deoxythymidine-5'-monophosphate (dTMP) while utilizing 5,10-methylenetetrahydrofolate (mTHF) as the methyl donor and reductant in the reaction, yielding dihydrofolate (DHF) as a by-product. This enzymatic reaction provides an intracellular de novo source of dTMP, an essential precursor for DNA biosynthesis. The protein is Thymidylate synthase of Caulobacter vibrioides (strain ATCC 19089 / CIP 103742 / CB 15) (Caulobacter crescentus).